The chain runs to 494 residues: 3-octaprenyl-4-hydroxybenzoate carboxy-lyase (494 aa).

Position 172 (Asn172) interacts with Mn(2+). Residues 175–177 (IYR), 189–191 (RWL), and 194–195 (RG) contribute to the prenylated FMN site. Glu238 contacts Mn(2+). The active-site Proton donor is Asp287.

The protein belongs to the UbiD family. In terms of assembly, homohexamer. Prenylated FMN is required as a cofactor. Requires Mn(2+) as cofactor.

The protein resides in the cell membrane. The enzyme catalyses a 4-hydroxy-3-(all-trans-polyprenyl)benzoate + H(+) = a 2-(all-trans-polyprenyl)phenol + CO2. The protein operates within cofactor biosynthesis; ubiquinone biosynthesis. Catalyzes the decarboxylation of 3-octaprenyl-4-hydroxy benzoate to 2-octaprenylphenol, an intermediate step in ubiquinone biosynthesis. The sequence is that of 3-octaprenyl-4-hydroxybenzoate carboxy-lyase from Erwinia tasmaniensis (strain DSM 17950 / CFBP 7177 / CIP 109463 / NCPPB 4357 / Et1/99).